The primary structure comprises 510 residues: Cytochrome P450 monooxygenase AFLA_114810 (510 aa).

The N-terminal stretch at 1 to 17 (MLILLGLLCLYTGLYVA) is a signal peptide. Residue Cys444 participates in heme binding.

The protein belongs to the cytochrome P450 family. Heme serves as cofactor.

The protein operates within secondary metabolite biosynthesis. Its function is as follows. Cytochrome P450 monooxygenase; part of the gene cluster 41 that mediates the biosynthesis of an extracellular and diffusible metabolite that is able to stimulate colony sclerotial production. The polypeptide is Cytochrome P450 monooxygenase AFLA_114810 (Aspergillus flavus (strain ATCC 200026 / FGSC A1120 / IAM 13836 / NRRL 3357 / JCM 12722 / SRRC 167)).